The primary structure comprises 500 residues: MGPGGRQSAEPASTEVFGDSDFVVVANRLPVDQERLPDGTIAWKRSPGGLVTALEPLLRRRRGAWVGWAGVVENDVDVQDEPIVQDELQLQPVRLSADDVAQYYEGFSNATLWPLYHDVIVRPIYHREWWDRYVDVNRRFAEATARAAARGGTVWVQDYQLQLVPKMLRAMRPDLTIGFFLHIPFPPVELFMQLPWRTEIIQGLLGADLVGFHLPGGAQNFLILSRRLVGADTSRGTVGVRSRFGEVILGSRTIRVGAFPISIDSGALDQTARDRNIRRRSREIRAELGNPRKILLGVDRLDYTKGIDVRLKAFSELLAEGRVKRDDTVLVQLATPSRERVESYQTLRNDIERQVGHINGEYAEVGHPVVHYLHRPVPRNELIAFFVASDVMLVTPLRDGMNLVAKEYVACRSDLGGALVLSEFTGAAAELRHAYLVNPHDLEGVKDGIEEALNQTEEAGRRRMRSMRRQVLAHDVDRWARSFLDALADSRPNDSADAAD.

Arginine 28 contributes to the D-glucose 6-phosphate binding site. 48–49 (GG) contacts UDP-alpha-D-glucose. The D-glucose 6-phosphate site is built by tyrosine 104 and aspartate 158. Residues arginine 300 and lysine 305 each coordinate UDP-alpha-D-glucose. Arginine 338 is a D-glucose 6-phosphate binding site. UDP-alpha-D-glucose is bound at residue 403-407 (LVAKE).

Belongs to the glycosyltransferase 20 family. As to quaternary structure, homotetramer.

It carries out the reaction ADP-alpha-D-glucose + D-glucose 6-phosphate = alpha,alpha-trehalose 6-phosphate + ADP + H(+). The enzyme catalyses CDP-alpha-D-glucose + D-glucose 6-phosphate = alpha,alpha-trehalose 6-phosphate + CDP + H(+). The catalysed reaction is GDP-alpha-D-glucose + D-glucose 6-phosphate = alpha,alpha-trehalose 6-phosphate + GDP + H(+). It catalyses the reaction TDP-alpha-D-glucose + D-glucose 6-phosphate = 5-methyl-UDP + alpha,alpha-trehalose 6-phosphate + H(+). It carries out the reaction D-glucose 6-phosphate + UDP-alpha-D-glucose = alpha,alpha-trehalose 6-phosphate + UDP + H(+). Its pathway is glycan biosynthesis; trehalose biosynthesis. Its function is as follows. Probably involved in the osmoprotection via the biosynthesis of trehalose and in the production of glycogen and alpha-glucan via the TreS-Pep2 branch involved in the biosynthesis of maltose-1-phosphate (M1P). Catalyzes the transfer of glucose from UDP-glucose (UDP-Glc) to D-glucose 6-phosphate (Glc-6-P) to form trehalose-6-phosphate. Probably also able to use ADP-Glc, CDP-Glc, GDP-Glc and TDP-Glc as glucosyl donors. The chain is Trehalose-6-phosphate synthase from Mycobacterium marinum (strain ATCC BAA-535 / M).